Reading from the N-terminus, the 962-residue chain is MENVEEAPPLSSESNSNSNNSSASSSSHQLSQSGAMGAEIAPSTSRSHSHSPTPSPPVPASSHDQPHPDHPSPPLNASETEARENSPHDHSPTPTFHQTAPPPTTSSTAPQRDEREQQQQQEAPPLQQDQQENSPAQDQELHPLLDQQNQEYPAVHQDQQAEQNQELHHIEGLIRHRESQNPEEHPPQASLENRETLGREDTNQEPDEPQVRDPEIEPEAEPPPPLLLEDLDEQDSGSQDLNEQQPPLIIDANAIAETIDANAVERIDDYEDDDEEVDEEEEVVEDRVDRAGEVASVSGAQRLHSVAVLPRYSSASRAPRSSNNNNNNISNHNNNNNNSNSNSLSRRTRHFYSNNGSHFSNDMFPSHNPRSSTQTSSPRVGGRRHHSTPAASSNSPQHQGVDPLRLLYPNVNESETPLPRCWSPHDKCLSIGLSQNNLRVTYKGVGKQHSDAASVRTAYPIPSSCGLYYFEVRIISKGRNGYMGIGLTAQQFRMNRLPGWDKQSYGYHGDDGNSFSSSGNGQTYGPTFTTGDVIGCCVNFVNNTCFYTKNGVDLGIAFRDLPTKLYPTVGLQTPGEEVDANFGQEPFKFDKIVDMMKEMRSNVLRKIDRYPHLLETPENLMNRLVSTYLVHNAFSKTAEAFNGYTNQTFNEDLASIKTRQKIIKLILTGKMSQAIEHTLRSFPGLLENNKNLWFALKCRQFIEMINGADIENVNNKVTATTQTMPTNQTSVIQSTKTFKHSKSGSGNGNVNINQTQQQNNTAIPAVIKPQGGDRPDIKNMLVDDNSNKCVEHDSNSMDVEMEPCQSHSNGGDSSSNGNASAVRNSLDAIDEEMDVDVSPSSRNCGRVIEKILEFGKELSSMGQQLEKENLMTEEERQMLEDAFSLIAYSNPWSSPLGWLLCPSRRESVSTTLNSAILESLNFERRPPLEYLVAHASELIKVIGQHSLGEDAFITIDDVFPQN.

Composition is skewed to low complexity over residues 1-33 (MENVEEAPPLSSESNSNSNNSSASSSSHQLSQS) and 41-52 (APSTSRSHSHSP). 3 disordered regions span residues 1-246 (MENV…EQQP), 271-296 (EDDDEEVDEEEEVVEDRVDRAGEVAS), and 313-402 (SSAS…QGVD). Residues 80-91 (TEARENSPHDHS) show a composition bias toward basic and acidic residues. Residues 118–132 (QQQQEAPPLQQDQQE) show a composition bias toward low complexity. The span at 146–164 (DQQNQEYPAVHQDQQAEQN) shows a compositional bias: polar residues. A compositionally biased stretch (basic and acidic residues) spans 165-202 (QELHHIEGLIRHRESQNPEEHPPQASLENRETLGREDT). Residues 236 to 245 (SGSQDLNEQQ) are compositionally biased toward polar residues. Residues 271–284 (EDDDEEVDEEEEVV) are compositionally biased toward acidic residues. Residues 321-343 (SSNNNNNNISNHNNNNNNSNSNS) show a composition bias toward low complexity. Composition is skewed to polar residues over residues 351–360 (FYSNNGSHFS) and 368–378 (NPRSSTQTSSP). A phosphoserine mark is found at Ser387, Ser393, and Ser395. Polar residues predominate over residues 389 to 398 (PAASSNSPQH). The B30.2/SPRY domain maps to 400–587 (GVDPLRLLYP…VDANFGQEPF (188 aa)). The region spanning 617–649 (PENLMNRLVSTYLVHNAFSKTAEAFNGYTNQTF) is the LisH domain. Residues 655–712 (SIKTRQKIIKLILTGKMSQAIEHTLRSFPGLLENNKNLWFALKCRQFIEMINGADIEN) enclose the CTLH domain. The tract at residues 800–820 (EMEPCQSHSNGGDSSSNGNAS) is disordered. Residues 806–820 (SHSNGGDSSSNGNAS) are compositionally biased toward low complexity.

This sequence belongs to the RANBP9/10 family. As to expression, expressed in the GSCs and in dividing cysts. Expression is reduced in the germline as individual egg chambers are formed. Isoform C is expressed in all somatic and germline cells of the ovary. Isoform D is expressed in the GSC niche.

The protein localises to the cytoplasm. The protein resides in the membrane. It is found in the nucleus. In terms of biological role, may be involved in JAK/STAT signaling. Isoform D is required for the proper arrangement of niche cells and is autonomously required for proper niche cell size, isoform C negatively regulates the adhesive properties of the niche. The germline stem cell (GSC) niche in ovaries is made up of two somatic cell types: 8-9 cells in a single-filed array make up the terminal filament (TF), and a tight cluster of 5 or 6 cap cells (CpC). Regulating the size and adhesive properties of the CpCs is an important component of the mechanism that controls their capacity to support stem cells, isoform C and isoform D are important factors in mediating this regulation. In contrast, isoform C acts as a positive regulator of cell adhesion in follicle cell epithelium. In Drosophila melanogaster (Fruit fly), this protein is Ran-binding proteins 9/10 homolog (RanBPM).